A 129-amino-acid chain; its full sequence is Modulator protein MzrA (129 aa).

The Cytoplasmic portion of the chain corresponds to 1–14 (MINFRGRFGRPLWH). The helical transmembrane segment at 15–35 (YLVLPVVLLLLAVILLTPMIV) threads the bilayer. Residues 36 to 129 (QTESTLKIRP…VFRSNQQNLG (94 aa)) are Periplasmic-facing.

Belongs to the MzrA family. As to quaternary structure, interacts with EnvZ.

Its subcellular location is the cell inner membrane. Modulates the activity of the EnvZ/OmpR two-component regulatory system, probably by directly modulating EnvZ enzymatic activity and increasing stability of phosphorylated OmpR. This is Modulator protein MzrA from Yersinia pestis (strain Pestoides F).